The sequence spans 740 residues: Glycerol dehydrogenase large subunit (740 aa).

Positions 1-29 (MRRPYLLATAAGLALACSPLIAHAQFAPA) are cleaved as a signal peptide. Disordered regions lie at residues 28–105 (PAGA…GDWV) and 442–468 (LPVEERPAPSPGVIPGDPRSPTQPWSV). Residues 34-43 (EPSSSVPGPG) are compositionally biased toward low complexity. Residues 46–58 (SEPTENSPKSQSY) are compositionally biased toward polar residues.

This sequence belongs to the bacterial PQQ dehydrogenase family. Pyrroloquinoline quinone is required as a cofactor.

It is found in the secreted. It catalyses the reaction glycerol + A = dihydroxyacetone + AH2. Catalyzes the oxidation of glycerol to glycerone. Also acts, more slowly, on a number of other polyols including D-sorbitol, D-arabinitol, D-mannitol, meso-erythritol, adonitol and propylene glycol. The polypeptide is Glycerol dehydrogenase large subunit (sldA) (Gluconobacter thailandicus).